Consider the following 569-residue polypeptide: Mitogen-activated protein kinase 7 (569 aa).

One can recognise a Protein kinase domain in the interval 13–304 (YKIQEIVGKG…AEEALADPYF (292 aa)). ATP-binding positions include 19–27 (VGKGSYGVV) and Lys42. The Proton acceptor role is filled by Asp139. Thr175 is modified (phosphothreonine). A TXY motif is present at residues 175-177 (TDY). Residue Tyr177 is modified to Phosphotyrosine. The tract at residues 401 to 420 (TTVHSTSIPPNEGLDATSQV) is disordered.

Belongs to the protein kinase superfamily. CMGC Ser/Thr protein kinase family. MAP kinase subfamily. Post-translationally, dually phosphorylated on Thr-175 and Tyr-177, which activates the enzyme.

The catalysed reaction is L-seryl-[protein] + ATP = O-phospho-L-seryl-[protein] + ADP + H(+). The enzyme catalyses L-threonyl-[protein] + ATP = O-phospho-L-threonyl-[protein] + ADP + H(+). Its activity is regulated as follows. Activated by threonine and tyrosine phosphorylation. The protein is Mitogen-activated protein kinase 7 (MPK7) of Oryza sativa subsp. japonica (Rice).